A 271-amino-acid polypeptide reads, in one-letter code: Type III pantothenate kinase (271 aa).

Residue 6–13 (DVRNTHTV) participates in ATP binding. 109 to 112 (GADR) lines the substrate pocket. The active-site Proton acceptor is Asp-111. Asp-131 serves as a coordination point for K(+). Residue Ser-134 participates in ATP binding. Thr-186 contacts substrate.

It belongs to the type III pantothenate kinase family. In terms of assembly, homodimer. The cofactor is NH4(+). K(+) serves as cofactor.

It is found in the cytoplasm. The enzyme catalyses (R)-pantothenate + ATP = (R)-4'-phosphopantothenate + ADP + H(+). The protein operates within cofactor biosynthesis; coenzyme A biosynthesis; CoA from (R)-pantothenate: step 1/5. Catalyzes the phosphorylation of pantothenate (Pan), the first step in CoA biosynthesis. The chain is Type III pantothenate kinase from Mycolicibacterium smegmatis (strain ATCC 700084 / mc(2)155) (Mycobacterium smegmatis).